The primary structure comprises 362 residues: Glycyl-glycine endopeptidase ALE-1 (362 aa).

The N-terminal stretch at 1-35 is a signal peptide; sequence MDTNRKFTLVKSLSIGLGTFLVGSVFLTVNDEASA. A disordered region spans residues 35 to 110; it reads ASTKVDAPKV…PAKADAPKVE (76 aa). A compositionally biased stretch (basic and acidic residues) spans 40 to 110; it reads DAPKVEQEAP…PAKADAPKVE (71 aa). Residues His-150 and Asp-154 each contribute to the Zn(2+) site. The active site involves His-231. His-233 provides a ligand contact to Zn(2+). The SH3b domain maps to 282–350; that stretch reads SESASFTANT…YLPVRTWNES (69 aa).

The protein belongs to the peptidase M23B family. It depends on Zn(2+) as a cofactor.

The protein resides in the secreted. The enzyme catalyses Hydrolysis of the -Gly-|-Gly- bond in the pentaglycine inter-peptide link joining staphylococcal cell wall peptidoglycans.. Lyses staphylococcal cells by hydrolyzing the polyglycine interpeptide bridges of the peptidoglycan. The protein is Glycyl-glycine endopeptidase ALE-1 of Staphylococcus capitis.